The chain runs to 58 residues: MAVPKKRKSKMKTRLRKAQWKSEASREAAKALSKAKTVIKSLLAANSANLESNSENSN.

Positions 1-19 (MAVPKKRKSKMKTRLRKAQ) are enriched in basic residues. The segment at 1–25 (MAVPKKRKSKMKTRLRKAQWKSEAS) is disordered.

This sequence belongs to the bacterial ribosomal protein bL32 family.

Its subcellular location is the plastid. The protein localises to the chloroplast. In Chlorella vulgaris (Green alga), this protein is Large ribosomal subunit protein bL32c (rpl32).